The sequence spans 255 residues: 4-hydroxy-tetrahydrodipicolinate reductase (255 aa).

NAD(+)-binding positions include 9–14 (GFKGKM), D35, 89–91 (GTT), and 115–118 (APNF). Residue H145 is the Proton donor/acceptor of the active site. H146 serves as a coordination point for (S)-2,3,4,5-tetrahydrodipicolinate. K149 serves as the catalytic Proton donor. 155–156 (GT) contributes to the (S)-2,3,4,5-tetrahydrodipicolinate binding site.

This sequence belongs to the DapB family.

It is found in the cytoplasm. The catalysed reaction is (S)-2,3,4,5-tetrahydrodipicolinate + NAD(+) + H2O = (2S,4S)-4-hydroxy-2,3,4,5-tetrahydrodipicolinate + NADH + H(+). The enzyme catalyses (S)-2,3,4,5-tetrahydrodipicolinate + NADP(+) + H2O = (2S,4S)-4-hydroxy-2,3,4,5-tetrahydrodipicolinate + NADPH + H(+). It functions in the pathway amino-acid biosynthesis; L-lysine biosynthesis via DAP pathway; (S)-tetrahydrodipicolinate from L-aspartate: step 4/4. In terms of biological role, catalyzes the conversion of 4-hydroxy-tetrahydrodipicolinate (HTPA) to tetrahydrodipicolinate. This chain is 4-hydroxy-tetrahydrodipicolinate reductase, found in Streptococcus pneumoniae serotype 4 (strain ATCC BAA-334 / TIGR4).